Reading from the N-terminus, the 194-residue chain is ATP-dependent Clp protease proteolytic subunit 3 (194 aa).

S96 (nucleophile) is an active-site residue. The active site involves H121.

This sequence belongs to the peptidase S14 family. As to quaternary structure, fourteen ClpP subunits assemble into 2 heptameric rings which stack back to back to give a disk-like structure with a central cavity, resembling the structure of eukaryotic proteasomes.

It localises to the cytoplasm. The catalysed reaction is Hydrolysis of proteins to small peptides in the presence of ATP and magnesium. alpha-casein is the usual test substrate. In the absence of ATP, only oligopeptides shorter than five residues are hydrolyzed (such as succinyl-Leu-Tyr-|-NHMec, and Leu-Tyr-Leu-|-Tyr-Trp, in which cleavage of the -Tyr-|-Leu- and -Tyr-|-Trp bonds also occurs).. In terms of biological role, cleaves peptides in various proteins in a process that requires ATP hydrolysis. Has a chymotrypsin-like activity. Plays a major role in the degradation of misfolded proteins. This Rhizobium etli (strain ATCC 51251 / DSM 11541 / JCM 21823 / NBRC 15573 / CFN 42) protein is ATP-dependent Clp protease proteolytic subunit 3.